The chain runs to 230 residues: UPF0173 metal-dependent hydrolase Dshi_2788 (230 aa).

It belongs to the UPF0173 family.

This chain is UPF0173 metal-dependent hydrolase Dshi_2788, found in Dinoroseobacter shibae (strain DSM 16493 / NCIMB 14021 / DFL 12).